We begin with the raw amino-acid sequence, 216 residues long: uncharacterized protein (216 aa).

Residues Met-1–Phe-21 form a helical membrane-spanning segment.

It is found in the membrane. This is an uncharacterized protein from Saccharomyces cerevisiae (strain ATCC 204508 / S288c) (Baker's yeast).